Here is a 176-residue protein sequence, read N- to C-terminus: Nutrient stress-induced DNA-binding protein (176 aa).

Belongs to the Dps family. Hexamer.

Functionally, involved in protection of chromosomal DNA from damage under nutrient-limited and oxidative stress conditions. Binds heme. This is Nutrient stress-induced DNA-binding protein (dpsA) from Synechococcus sp. (strain ATCC 27144 / PCC 6301 / SAUG 1402/1) (Anacystis nidulans).